We begin with the raw amino-acid sequence, 178 residues long: MATIRIHDEKNTLIEHQEEVARFLDEQEVIYEQWNIEKLPSELSEKYDLTEDEKERILAVFDTEIQDISARRGYQSQDVISLSDTTPNLDELLKNFQREHHHTDDEVRFIVSGHGIFVIQGKDGTFFDVRLNPGDLISVPENIRHYFTLQEDRRVVAIRIFVTTEGWVPIYENESVQN.

Fe(2+) contacts are provided by H100, H102, E106, and H145. H100, H102, E106, and H145 together coordinate Ni(2+).

This sequence belongs to the acireductone dioxygenase (ARD) family. Monomer. Fe(2+) is required as a cofactor. Requires Ni(2+) as cofactor.

The catalysed reaction is 1,2-dihydroxy-5-(methylsulfanyl)pent-1-en-3-one + O2 = 3-(methylsulfanyl)propanoate + CO + formate + 2 H(+). It carries out the reaction 1,2-dihydroxy-5-(methylsulfanyl)pent-1-en-3-one + O2 = 4-methylsulfanyl-2-oxobutanoate + formate + 2 H(+). It participates in amino-acid biosynthesis; L-methionine biosynthesis via salvage pathway; L-methionine from S-methyl-5-thio-alpha-D-ribose 1-phosphate: step 5/6. Its function is as follows. Catalyzes 2 different reactions between oxygen and the acireductone 1,2-dihydroxy-3-keto-5-methylthiopentene (DHK-MTPene) depending upon the metal bound in the active site. Fe-containing acireductone dioxygenase (Fe-ARD) produces formate and 2-keto-4-methylthiobutyrate (KMTB), the alpha-ketoacid precursor of methionine in the methionine recycle pathway. Ni-containing acireductone dioxygenase (Ni-ARD) produces methylthiopropionate, carbon monoxide and formate, and does not lie on the methionine recycle pathway. The polypeptide is Acireductone dioxygenase (Bacillus velezensis (strain DSM 23117 / BGSC 10A6 / LMG 26770 / FZB42) (Bacillus amyloliquefaciens subsp. plantarum)).